Consider the following 218-residue polypeptide: Lactosylceramide 4-alpha-galactosyltransferase (218 aa).

Residues 57–59 (DTD) carry the DXD motif motif.

It belongs to the glycosyltransferase 32 family.

It localises to the golgi apparatus membrane. It catalyses the reaction a beta-D-Gal-(1-&gt;4)-beta-D-Glc-(1&lt;-&gt;1)-Cer(d18:1(4E)) + UDP-alpha-D-galactose = a globoside Gb3Cer (d18:1(4E)) + UDP + H(+). The catalysed reaction is a beta-D-Gal-(1&lt;-&gt;1')-ceramide + UDP-alpha-D-galactose = alpha-D-Gal-(1-&gt;4)-beta-D-Gal-(1&lt;-&gt;1')-Cer + UDP + H(+). It functions in the pathway glycolipid biosynthesis. Its function is as follows. Catalyzes the transfer of galactose from UDP-alpha-D-galactose to lactosylceramide/beta-D-galactosyl-(1-&gt;4)-beta-D-glucosyl-(1&lt;-&gt;1)-ceramide(d18:1(4E)) to produce globotriaosylceramide/globoside Gb3Cer (d18:1(4E)). Also able to transfer galactose to galactosylceramide/beta-D-Gal-(1&lt;-&gt;1')-Cer. Globoside Gb3Cer is a glycosphingolipid of the globo serie, one of the major types of neutral root structures of glycosphingolipids, that constitute a significant portion of mammalian cell membranes. The protein is Lactosylceramide 4-alpha-galactosyltransferase (A4GALT) of Pongo pygmaeus (Bornean orangutan).